The sequence spans 354 residues: Protein RecA (354 aa).

ATP is bound at residue 65–72 (GPESSGKT).

Belongs to the RecA family.

The protein resides in the cytoplasm. Its function is as follows. Can catalyze the hydrolysis of ATP in the presence of single-stranded DNA, the ATP-dependent uptake of single-stranded DNA by duplex DNA, and the ATP-dependent hybridization of homologous single-stranded DNAs. It interacts with LexA causing its activation and leading to its autocatalytic cleavage. This Vibrio cholerae serotype O1 (strain ATCC 39315 / El Tor Inaba N16961) protein is Protein RecA.